The following is a 337-amino-acid chain: Pseudouridine-5'-phosphate glycosidase (337 aa).

The active-site Proton donor is E26. Substrate-binding residues include K87 and V107. Mn(2+) is bound at residue D139. 141-143 contributes to the substrate binding site; that stretch reads SAD. The Nucleophile role is filled by K160. Positions 306-325 are enriched in low complexity; the sequence is SSGPQAGAGAPGAEPGPARR. Positions 306–337 are disordered; that stretch reads SSGPQAGAGAPGAEPGPARRTSPARAPSGEGW.

Belongs to the pseudouridine-5'-phosphate glycosidase family. In terms of assembly, homotrimer. It depends on Mn(2+) as a cofactor.

It carries out the reaction D-ribose 5-phosphate + uracil = psi-UMP + H2O. Its function is as follows. Catalyzes the reversible cleavage of pseudouridine 5'-phosphate (PsiMP) to ribose 5-phosphate and uracil. Functions biologically in the cleavage direction, as part of a pseudouridine degradation pathway. The polypeptide is Pseudouridine-5'-phosphate glycosidase (Methylobacterium nodulans (strain LMG 21967 / CNCM I-2342 / ORS 2060)).